The chain runs to 235 residues: MPEATLTKKIIIAIDGPAASGKSTTAKQLAQKLSYTYIDTGAMYRAVTLKVLRDAFFEKIFSDELFLKKLLSETEVILKGEKVFLDGEEVTKDIRTNEVSSKVSKVSSLPLVREKLVEYQRNMGKARGVVMDGRDIGTIVFPDAELKVFMIADAKERAKRRYAELKAKSPSGDPGVTLETLEQEILQRDEDDRTRAIAPLRKPDDARELDTSKMTIEEQVAAIYELATDVISQLK.

16 to 24 (GPAASGKST) contacts ATP.

Belongs to the cytidylate kinase family. Type 1 subfamily.

It localises to the cytoplasm. The catalysed reaction is CMP + ATP = CDP + ADP. The enzyme catalyses dCMP + ATP = dCDP + ADP. This is Cytidylate kinase from Chloroherpeton thalassium (strain ATCC 35110 / GB-78).